Consider the following 43-residue polypeptide: Protein PsbN (43 aa).

A helical membrane pass occupies residues 7-29; the sequence is VAIFLSGLLVSFTGYALYTAFGQ.

Belongs to the PsbN family.

It is found in the plastid. The protein localises to the chloroplast thylakoid membrane. May play a role in photosystem I and II biogenesis. This is Protein PsbN from Draba nemorosa (Woodland whitlowgrass).